An 862-amino-acid polypeptide reads, in one-letter code: MAQLSFNAALKMNALGNKAIHDPTNCRAKSERQMMWVCSRSGRTRVKMSRGSGGPGPVVMMSSSTGTSKVVSETSSTIVDDIPRLSANYHGDLWHHNVIQTLETPFRESSTYQERADELVVKIKDMFNALGDGDISPSAYDTAWVARLATISSDGSEKPRFPQALNWVFNNQLQDGSWGIESHFSLCDRLLNTTNSVIALSVWKTGHSQVQQGAEFIAENLRLLNEEDELSPDFQIIFPALLQKAKALGINLPYDLPFIKYLSTTREARLTDVSAAADNIPANMLNALEGLEEVIDWNKIMRFQSKDGSFLSSPASTACVLMNTGDEKCFTFLNNLLDKFGGCVPCMYSIDLLERLSLVDNIEHLGIGRHFKQEIKGALDYVYRHWSERGIGWGRDSLVPDLNTTALGLRTLRMHGYNVSSDVLNNFKDENGRFFSSAGQTHVELRSVVNLFRASDLAFPDERAMDDARKFAEPYLREALATKISTNTKLFKEIEYVVEYPWHMSIPRLEARSYIDSYDDNYVWQRKTLYRMPSLSNSKCLELAKLDFNIVQSLHQEELKLLTRWWKESGMADINFTRHRVAEVYFSSATFEPEYSATRIAFTKIGCLQVLFDDMADIFATLDELKSFTEGVKRWDTSLLHEIPECMQTCFKVWFKLMEEVNNDVVKVQGRDMLAHIRKPWELYFNCYVQEREWLEAGYIPTFEEYLKTYAISVGLGPCTLQPILLMGELVKDDVVEKVHYPSNMFELVSLSWRLTNDTKTYQAEKARGQQASGIACYMKDNPGATEEDAIKHICRVVDRALKEASFEYFKPSNDIPMGCKSFIFNLRLCVQIFYKFIDGYGIANEEIKDYIRKVYIDPIQV.

5 residues coordinate Mg(2+): D613, D617, N757, T761, and E765. The DDXXD motif motif lies at 613 to 617; sequence DDMAD.

Belongs to the terpene synthase family. Mg(2+) is required as a cofactor.

It carries out the reaction (2E,6E,10E)-geranylgeranyl diphosphate = taxa-4(5),11(12)-diene + diphosphate. It functions in the pathway alkaloid biosynthesis; taxol biosynthesis; taxa-4(20),11-dien-5alpha-ol from geranylgeranyl diphosphate: step 1/2. Its function is as follows. Catalyzes the cyclization of the ubiquitous isoprenoid intermediate geranylgeranyl diphosphate to taxa-4,11-diene, the parent olefin with a taxane skeleton. The chain is Taxadiene synthase (TDC1) from Taxus brevifolia (Pacific yew).